A 288-amino-acid chain; its full sequence is Diaminopimelate epimerase (288 aa).

Residues N14 and N67 each coordinate substrate. Catalysis depends on C76, which acts as the Proton donor. Residues 77–78, N166, N199, and 217–218 contribute to the substrate site; these read GN and ER. The Proton acceptor role is filled by C226. 227-228 is a substrate binding site; sequence GT.

Belongs to the diaminopimelate epimerase family. As to quaternary structure, homodimer.

The protein resides in the cytoplasm. The enzyme catalyses (2S,6S)-2,6-diaminopimelate = meso-2,6-diaminopimelate. It participates in amino-acid biosynthesis; L-lysine biosynthesis via DAP pathway; DL-2,6-diaminopimelate from LL-2,6-diaminopimelate: step 1/1. Functionally, catalyzes the stereoinversion of LL-2,6-diaminopimelate (L,L-DAP) to meso-diaminopimelate (meso-DAP), a precursor of L-lysine and an essential component of the bacterial peptidoglycan. In Bacillus cytotoxicus (strain DSM 22905 / CIP 110041 / 391-98 / NVH 391-98), this protein is Diaminopimelate epimerase.